Reading from the N-terminus, the 68-residue chain is DNA gyrase inhibitor YacG (68 aa).

4 residues coordinate Zn(2+): C14, C17, C29, and C33.

Belongs to the DNA gyrase inhibitor YacG family. As to quaternary structure, interacts with GyrB. It depends on Zn(2+) as a cofactor.

Inhibits all the catalytic activities of DNA gyrase by preventing its interaction with DNA. Acts by binding directly to the C-terminal domain of GyrB, which probably disrupts DNA binding by the gyrase. In Azorhizobium caulinodans (strain ATCC 43989 / DSM 5975 / JCM 20966 / LMG 6465 / NBRC 14845 / NCIMB 13405 / ORS 571), this protein is DNA gyrase inhibitor YacG.